Reading from the N-terminus, the 318-residue chain is Bifunctional protein FolD 3 (318 aa).

Residues 173–175 and I242 contribute to the NADP(+) site; that span reads GRS.

The protein belongs to the tetrahydrofolate dehydrogenase/cyclohydrolase family. In terms of assembly, homodimer.

The catalysed reaction is (6R)-5,10-methylene-5,6,7,8-tetrahydrofolate + NADP(+) = (6R)-5,10-methenyltetrahydrofolate + NADPH. It carries out the reaction (6R)-5,10-methenyltetrahydrofolate + H2O = (6R)-10-formyltetrahydrofolate + H(+). It functions in the pathway one-carbon metabolism; tetrahydrofolate interconversion. Its function is as follows. Catalyzes the oxidation of 5,10-methylenetetrahydrofolate to 5,10-methenyltetrahydrofolate and then the hydrolysis of 5,10-methenyltetrahydrofolate to 10-formyltetrahydrofolate. The polypeptide is Bifunctional protein FolD 3 (Rubrobacter xylanophilus (strain DSM 9941 / JCM 11954 / NBRC 16129 / PRD-1)).